The chain runs to 531 residues: 2-isopropylmalate synthase (531 aa).

One can recognise a Pyruvate carboxyltransferase domain in the interval 8–284 (IIIFDTTLRD…LTNIDTKQIY (277 aa)). Residues Asp17, His208, His210, and Asn244 each coordinate Mn(2+). Residues 408-531 (RVELVQVSCG…TQDKQTEVTA (124 aa)) are regulatory domain.

Belongs to the alpha-IPM synthase/homocitrate synthase family. LeuA type 1 subfamily. Homodimer. Mn(2+) is required as a cofactor.

The protein localises to the cytoplasm. It carries out the reaction 3-methyl-2-oxobutanoate + acetyl-CoA + H2O = (2S)-2-isopropylmalate + CoA + H(+). The protein operates within amino-acid biosynthesis; L-leucine biosynthesis; L-leucine from 3-methyl-2-oxobutanoate: step 1/4. Catalyzes the condensation of the acetyl group of acetyl-CoA with 3-methyl-2-oxobutanoate (2-ketoisovalerate) to form 3-carboxy-3-hydroxy-4-methylpentanoate (2-isopropylmalate). The polypeptide is 2-isopropylmalate synthase (Trichormus variabilis (strain ATCC 29413 / PCC 7937) (Anabaena variabilis)).